A 773-amino-acid polypeptide reads, in one-letter code: Beta-hexosaminidase B (773 aa).

Residues 1–19 (MKFNRLMALLFGVSSPLYA) form the signal peptide. Disulfide bonds link cysteine 46-cysteine 53, cysteine 389-cysteine 397, and cysteine 496-cysteine 542. The active-site Proton donor is glutamate 531.

The protein belongs to the glycosyl hydrolase 20 family.

The enzyme catalyses Hydrolysis of terminal non-reducing N-acetyl-D-hexosamine residues in N-acetyl-beta-D-hexosaminides.. The sequence is that of Beta-hexosaminidase B (nag096) from Pseudoalteromonas piscicida.